We begin with the raw amino-acid sequence, 463 residues long: Glycine--tRNA ligase (463 aa).

Arg-98 and Glu-174 together coordinate substrate. ATP is bound by residues 206–208 (RNE), 216–221 (FRTREF), 290–291 (EL), and 334–337 (GADR). Residue 221-225 (FEQME) coordinates substrate. Substrate is bound at residue 330 to 334 (EPSLG).

The protein belongs to the class-II aminoacyl-tRNA synthetase family. As to quaternary structure, homodimer.

It is found in the cytoplasm. It catalyses the reaction tRNA(Gly) + glycine + ATP = glycyl-tRNA(Gly) + AMP + diphosphate. In terms of biological role, catalyzes the attachment of glycine to tRNA(Gly). This chain is Glycine--tRNA ligase, found in Staphylococcus aureus (strain Mu50 / ATCC 700699).